The sequence spans 218 residues: Outer-membrane lipoprotein LolB (218 aa).

Positions 1–20 (MSQVIRTLALTGLALAGLSG) are cleaved as a signal peptide. Cys21 carries the N-palmitoyl cysteine lipid modification. Cys21 is lipidated: S-diacylglycerol cysteine.

It belongs to the LolB family. Monomer.

The protein localises to the cell outer membrane. Functionally, plays a critical role in the incorporation of lipoproteins in the outer membrane after they are released by the LolA protein. The protein is Outer-membrane lipoprotein LolB of Xanthomonas campestris pv. campestris (strain 8004).